Consider the following 321-residue polypeptide: Phospholipid phosphatase-related protein type 5 (321 aa).

A run of 6 helical transmembrane segments spans residues 10-30 (SSML…AYYF), 62-82 (AVPP…VIIV), 122-142 (FLGI…AGQV), 196-213 (AALS…ITNT), 225-245 (VLCL…VAEY), and 252-272 (VIAG…CVVN).

Belongs to the PA-phosphatase related phosphoesterase family. In terms of tissue distribution, isoform 1 is expressed in brain, lung, kidney and colon. Isoform 2 is expressed in placenta, skeletal muscle and kidney.

Its subcellular location is the cell membrane. Functionally, induces filopodia formation and promotes neurite growth in a CDC42-independent manner; impedes neurite growth inhibitory-mediated axonal retraction. This chain is Phospholipid phosphatase-related protein type 5, found in Homo sapiens (Human).